The sequence spans 139 residues: UPF0102 protein Caul_0175 (139 aa).

Belongs to the UPF0102 family.

This Caulobacter sp. (strain K31) protein is UPF0102 protein Caul_0175.